The following is a 562-amino-acid chain: Probable sesquiterpene synthase (562 aa).

The Mg(2+) site is built by Asp315, Asp319, and Glu467. The DDXXD motif motif lies at 315 to 319 (DDIYD).

Belongs to the terpene synthase family. Tpsa subfamily. The cofactor is Mg(2+). Requires Mn(2+) as cofactor.

Functionally, sesquiterpene synthase. The polypeptide is Probable sesquiterpene synthase (SesquiTPS) (Santalum austrocaledonicum (Sandalwood)).